The primary structure comprises 291 residues: Exosome complex component RRP42 (291 aa).

Alanine 2 is modified (N-acetylalanine). At lysine 116 the chain carries N6-acetyllysine. Serine 177 is modified (phosphoserine).

This sequence belongs to the RNase PH family. As to quaternary structure, component of the RNA exosome core complex (Exo-9), composed of EXOSC1, EXOSC2, EXOSC3, EXOSC4, EXOSC5, EXOSC6, EXOSC7, EXOSC8 and EXOSC9; within the complex interacts with EXOSC2 and EXOSC4. The catalytically inactive RNA exosome core complex (Exo-9) associates with the catalytic subunit EXOSC10/RRP6. Exo-9 may associate with DIS3 to form the nucleolar exosome complex, or DIS3L to form the cytoplasmic exosome complex. Exo-9 is formed by a hexameric base ring consisting of the heterodimers EXOSC4-EXOSC9, EXOSC5-EXOSC8 and EXOSC6-EXOSC7, and a cap ring consisting of EXOSC1, EXOSC2 and EXOSC3. The RNA exosome complex associates with cofactors C1D/RRP47, MPHOSPH6/MPP6 and MTREX/MTR4. Interacts with ZC3HAV1. Interacts with DIS3; the interaction is direct.

The protein resides in the nucleus. It localises to the nucleolus. The protein localises to the cytoplasm. Its function is as follows. Non-catalytic component of the RNA exosome complex which has 3'-&gt;5' exoribonuclease activity and participates in a multitude of cellular RNA processing and degradation events. In the nucleus, the RNA exosome complex is involved in proper maturation of stable RNA species such as rRNA, snRNA and snoRNA, in the elimination of RNA processing by-products and non-coding 'pervasive' transcripts, such as antisense RNA species and promoter-upstream transcripts (PROMPTs), and of mRNAs with processing defects, thereby limiting or excluding their export to the cytoplasm. The RNA exosome may be involved in Ig class switch recombination (CSR) and/or Ig variable region somatic hypermutation (SHM) by targeting AICDA deamination activity to transcribed dsDNA substrates. In the cytoplasm, the RNA exosome complex is involved in general mRNA turnover and specifically degrades inherently unstable mRNAs containing AU-rich elements (AREs) within their 3' untranslated regions, and in RNA surveillance pathways, preventing translation of aberrant mRNAs. It seems to be involved in degradation of histone mRNA. The catalytic inactive RNA exosome core complex of 9 subunits (Exo-9) is proposed to play a pivotal role in the binding and presentation of RNA for ribonucleolysis, and to serve as a scaffold for the association with catalytic subunits and accessory proteins or complexes. The polypeptide is Exosome complex component RRP42 (EXOSC7) (Homo sapiens (Human)).